Consider the following 1177-residue polypeptide: MRRAGRSRQFSSVEEAFSTSAARPGRRGRRSGRENTAKFVPATLSASTSFSRIEGISSRSVTLASPGSRSGSGPRSGPRLGPANRSTSRYRWVPAAAGWTVGVIATVSLLGSVSPLIRYLIKVPREFINDYLFNFPDTSIAWSFVLALLAAALTARKRIAWLLLLGNMILAAALNVADIAAGDNTAAEIFGENLGFAVHIVAIVLLVLAYREFWAKVRKGALVKAAAVLVAGDVVGILVSWGLVELFPGTLARQDRLPYVVNRVVGFALADPDLFTGRPHVFLNAIFGLFGALALIMATIVLFQSQRAENALTGEDESAIRGLLELYGKNDSLGYFATRRDKSVVFAQSGRAAITYRVEIGVCLASGDPIGDPRAWPQAVDAWLGLCQTYGWAPGVMGASTQGARTYREAGLNALELGDEAILRTSEFKLSGPDMRGVRQAVTRARRAGLTVRIRRHRDISPEAMADTIARADAWRDTQTERGFSMALGRLGDPADGDCLLVEAIDRDGSVVAMLSLVPWGTTGVSLDLMRRSPSSPNGTIELMVSELALNAESLGITRISLNFAMFRSAFEQGAQLGAGPVARLWRGLLLFFSRWWQLETLYRSNMKYQPDWVPRYACYEDARLIPRVGVASVIAEGFLVLPFSRRDKVHTGHHPAVPARLAQSGLLHHDGSAPDVSGLRPERTDAEEARSRLPEQVRVRLAKLKVLQRNGVDAYPVGCPPSHTVAQALDADDQQDITVAGRILRIRDFGGVLFAQLRDWSGEMQVLLDNSRLERGRTADFTAAIDLGDLVEVSGQMGFSKKGTRSLIVTDWRMIGKCLRPLPNKWKGLTDPEARVRTRYVDLAVNPESRELIAARSEVLRSVRQTLFAKGFIEVETPILQQIHGGATARPFVTHINTYDMDLFLRIAPELYLKRLCVGGVERVFELGRAFRNEGVDFSHNPEFTLLEAYQAHADYRVWIDGCRELIQNAAQAAHGEQTVLRPGADGRLQPVDISGIWAVKTVHDAVSEALGEQVDPGTSLSTLRKLSDAARIPYRAHWDAGAVVLELYEHLVEDRTEEPTFYVDFPTSVSPLTRPHRSRPGVAERWDLVAWGVELATAYSELTDPVEQRRRLQEQSLLAAGGDPEAMELDEDFLQAMEYAMPPTGGLGMGVDRLVMLITGRSIRETLPFPLAKPH.

2 disordered regions span residues 1-40 (MRRA…AKFV) and 61-85 (VTLA…PANR). Positions 1–676 (MRRAGRSRQF…LLHHDGSAPD (676 aa)) are phosphatidylglycerol lysyltransferase. Residues 8–21 (RQFSSVEEAFSTSA) show a composition bias toward polar residues. A compositionally biased stretch (low complexity) spans 65–82 (SPGSRSGSGPRSGPRLGP). 6 helical membrane-spanning segments follow: residues 93 to 113 (VPAA…LGSV), 135 to 155 (FPDT…ALTA), 159 to 179 (IAWL…VADI), 189 to 209 (IFGE…LVLA), 227 to 247 (AVLV…VELF), and 281 to 301 (VFLN…ATIV). Residues 673–693 (SAPDVSGLRPERTDAEEARSR) are disordered. The segment at 677–1177 (VSGLRPERTD…TLPFPLAKPH (501 aa)) is lysine--tRNA ligase. The segment covering 681 to 693 (RPERTDAEEARSR) has biased composition (basic and acidic residues). 2 residues coordinate Mg(2+): Asp1089 and Glu1096.

The protein in the N-terminal section; belongs to the LPG synthetase family. It in the C-terminal section; belongs to the class-II aminoacyl-tRNA synthetase family. Mg(2+) serves as cofactor.

It is found in the cell membrane. The enzyme catalyses tRNA(Lys) + L-lysine + ATP = L-lysyl-tRNA(Lys) + AMP + diphosphate. It carries out the reaction L-lysyl-tRNA(Lys) + a 1,2-diacyl-sn-glycero-3-phospho-(1'-sn-glycerol) = a 1,2-diacyl-sn-glycero-3-phospho-1'-(3'-O-L-lysyl)-sn-glycerol + tRNA(Lys). Its function is as follows. Catalyzes the production of L-lysyl-tRNA(Lys)transfer and the transfer of a lysyl group from L-lysyl-tRNA(Lys) to membrane-bound phosphatidylglycerol (PG), which produces lysylphosphatidylglycerol (LPG), one of the components of the bacterial membrane with a positive net charge. LPG synthesis contributes to the resistance to cationic antimicrobial peptides (CAMPs) and likely protects M.tuberculosis against the CAMPs produced by competiting microorganisms (bacteriocins). In fact, the modification of anionic phosphatidylglycerol with positively charged L-lysine results in repulsion of the peptides. This chain is Lysylphosphatidylglycerol biosynthesis bifunctional protein LysX (lysX), found in Mycobacterium avium (strain 104).